The chain runs to 473 residues: MNIKKFAKQATVLTFTTALLAGGATQAFAKETNQKPYKETYGISHITRHDMLQIPEQQKNEKYQVPEFDSSTIKNISSAKGLDVWDSWPLQNADGTVANYHGYHIVFALAGDPKNADDTSIYMFYQKVGETSIDSWKNAGRVFKDSDKFDANDSILKDQTQEWSGSATFTSDGKIRLFYTDFSGKHYGKQTLTTAQVNVSASDSSLNINGVEDYKSIFDGDGKTYQNVQQFIDEGNYSSGDNHTLRDPHYVEDKGHKYLVFEANTGTEDGYQGEESLFNKAYYGKSTSFFRQESQKLLQSDKKRTAELANGALGMIELNDDYTLKKVMKPLIASNTVTDEIERANVFKMNGKWYLFTDSRGSKMTIDGITSNDIYMLGYVSNSLTGPYKPLNKTGLVLKMDLDPNDVTFTYSHFAVPQAKGNNVVITSYMTNRGFYADKQSTFAPSFLLNIKGKKTSVVKDSILEQGQLTVNK.

The first 29 residues, Met1–Ala29, serve as a signal peptide directing secretion. Sucrose contacts are provided by Trp85, Asp86, and Ser164. The active-site Nucleophile is Asp86. Ca(2+) is bound at residue Asp241. Positions 246 and 247 each coordinate sucrose. Gln272, Leu308, Asn310, and Asp339 together coordinate Ca(2+). Position 340 (Glu340) interacts with sucrose. Glu342 serves as the catalytic Proton donor/acceptor. Arg360 is a binding site for sucrose.

This sequence belongs to the glycosyl hydrolase 68 family. Monomer.

It is found in the secreted. The catalysed reaction is [6)-beta-D-fructofuranosyl-(2-&gt;](n) alpha-D-glucopyranoside + sucrose = [6)-beta-D-fructofuranosyl-(2-&gt;](n+1) alpha-D-glucopyranoside + D-glucose. Ca(2+) may play an important structural role and promote stability of levansucrase. The enzyme concentration is a factor defining the molecular weight (MW) levan distribution. A bimodal distribution is reported at the usual enzyme concentrations. At low concentrations, the enzyme synthesizes high MW levan, and at high concentrations, it synthesizes low MW levan. Catalyzes the synthesis of levan, a fructose polymer, by transferring the fructosyl moiety from sucrose to a growing acceptor molecule. Also displays sucrose hydrolase activity. At low sucrose concentrations, functions as an hydrolase with water as acceptor, whereas at higher substrate concentrations it adds fructosyl units to a growing levan chain. The polypeptide is Levansucrase (Bacillus subtilis (strain 168)).